Consider the following 217-residue polypeptide: Adenylate kinase (217 aa).

Position 10-15 (10-15 (GAGKGT)) interacts with ATP. An NMP region spans residues 30–59 (STGDMLRAAVKAGTEMGLAAKKVMDAGGLV). AMP contacts are provided by residues threonine 31, arginine 36, 57 to 59 (GLV), 85 to 88 (GFPR), and glutamine 92. The tract at residues 122–159 (GRRSHPASGRTYHVKFNPPKVDGVDDVTGEPLVQRDDD) is LID. ATP-binding positions include arginine 123 and 132 to 133 (TY). AMP is bound by residues arginine 156 and arginine 167. Residue glycine 203 participates in ATP binding.

Belongs to the adenylate kinase family. In terms of assembly, monomer.

It is found in the cytoplasm. The enzyme catalyses AMP + ATP = 2 ADP. It functions in the pathway purine metabolism; AMP biosynthesis via salvage pathway; AMP from ADP: step 1/1. Catalyzes the reversible transfer of the terminal phosphate group between ATP and AMP. Plays an important role in cellular energy homeostasis and in adenine nucleotide metabolism. In Leptothrix cholodnii (strain ATCC 51168 / LMG 8142 / SP-6) (Leptothrix discophora (strain SP-6)), this protein is Adenylate kinase.